The primary structure comprises 222 residues: MIF4G domain-containing protein (222 aa).

The MIF4G domain maps to 3-205 (EPSREEYKIQ…LEIIEFRAAG (203 aa)).

Belongs to the MIF4GD family. In terms of assembly, interacts with EIF4G1, EIF4G2 and SLBP; probably tethered by SLBP to the 3'-end of mRNAs ending with the histone stem-loop, it also interacts with EIF4G1 which is bound to their 5'-end.

The protein localises to the cytoplasm. Its subcellular location is the nucleus. Functions in replication-dependent translation of histone mRNAs which differ from other eukaryotic mRNAs in that they do not end with a poly-A tail but a stem-loop. May participate in circularizing those mRNAs specifically enhancing their translation. In Homo sapiens (Human), this protein is MIF4G domain-containing protein (MIF4GD).